A 419-amino-acid chain; its full sequence is RING finger protein 150 (419 aa).

The signal sequence occupies residues 1-34 (MALSVIQACRSLALSTWLLSFCFVHLLCLDFTVA). Over 35–197 (EKEEWYTAFV…NLQKYVSRTS (163 aa)) the chain is Extracellular. A PA domain is found at 70 to 172 (SLKREARGVL…PKGRELVLLM (103 aa)). A helical membrane pass occupies residues 198-218 (VVFVSISFIILMIISLAWLVF). At 219-419 (YYIQRFRYAN…IDTPTDDPKC (201 aa)) the chain is on the cytoplasmic side. The segment at 267–308 (CAVCIEGYKPNDVVRILPCRHLFHKCCVDPWLVDHRTCPMCK) adopts an RING-type; atypical zinc-finger fold. The disordered stretch occupies residues 374–419 (SEPLSQDTMPTEQSELQPIASGSSDVSLTTGAGHSDIDTPTDDPKC). Positions 376-405 (PLSQDTMPTEQSELQPIASGSSDVSLTTGA) are enriched in polar residues.

It localises to the membrane. This is RING finger protein 150 (rnf150) from Danio rerio (Zebrafish).